We begin with the raw amino-acid sequence, 449 residues long: CBL-interacting protein kinase 31 (449 aa).

In terms of domain architecture, Protein kinase spans 20 to 275 (YELGRTIGEG…ISQILEDPWF (256 aa)). Residues 26 to 34 (IGEGTFAKV) and Lys-49 contribute to the ATP site. Asp-143 serves as the catalytic Proton acceptor. The interval 161–190 (DFGLSALTEQVKADGLLHTTCGTPNYVAPE) is activation loop. The NAF domain maps to 313–337 (DQPTSMNAFELISLNQALNLDNLFE).

This sequence belongs to the protein kinase superfamily. CAMK Ser/Thr protein kinase family. SNF1 subfamily. As to quaternary structure, may interact with CBL3. Mn(2+) serves as cofactor. In terms of processing, autophosphorylated. In terms of tissue distribution, highly expressed in leaf blade and leaf sheath, but not in other tissues.

The enzyme catalyses L-seryl-[protein] + ATP = O-phospho-L-seryl-[protein] + ADP + H(+). It carries out the reaction L-threonyl-[protein] + ATP = O-phospho-L-threonyl-[protein] + ADP + H(+). Functionally, involved in cold stress tolerance. CIPK serine-threonine protein kinases interact with CBL proteins. Binding of a CBL protein to the regulatory NAF domain of CIPK protein lead to the activation of the kinase in a calcium-dependent manner. The chain is CBL-interacting protein kinase 31 (CIPK31) from Oryza sativa subsp. japonica (Rice).